An 845-amino-acid polypeptide reads, in one-letter code: Protein P (845 aa).

The terminal protein domain (TP) stretch occupies residues 1–179 (MPLSYQHFRK…FCGSPYSWEQ (179 aa)). A spacer region spans residues 180 to 348 (ELQHGRLVIK…YCLSHLVNLR (169 aa)). The interval 226 to 245 (GLQPHQGPLASSQPGRSGSI) is disordered. Residues 349-692 (EDWGPCDEHG…YMNLYPVARQ (344 aa)) are polymerase/reverse transcriptase domain (RT). Positions 359–602 (EHHIRIPRTP…YSLNFMGYII (244 aa)) constitute a Reverse transcriptase domain. Mg(2+) is bound by residues Asp431, Asp553, and Asp554.

Belongs to the hepadnaviridae P protein family.

It carries out the reaction DNA(n) + a 2'-deoxyribonucleoside 5'-triphosphate = DNA(n+1) + diphosphate. The enzyme catalyses Endonucleolytic cleavage to 5'-phosphomonoester.. Its activity is regulated as follows. Activated by host HSP70 and HSP40 in vitro to be able to bind the epsilon loop of the pgRNA. Because deletion of the RNase H region renders the protein partly chaperone-independent, the chaperones may be needed indirectly to relieve occlusion of the RNA-binding site by this domain. Inhibited by several reverse-transcriptase inhibitors: Lamivudine, Adefovir and Entecavir. Multifunctional enzyme that converts the viral RNA genome into dsDNA in viral cytoplasmic capsids. This enzyme displays a DNA polymerase activity that can copy either DNA or RNA templates, and a ribonuclease H (RNase H) activity that cleaves the RNA strand of RNA-DNA heteroduplexes in a partially processive 3'- to 5'-endonucleasic mode. Neo-synthesized pregenomic RNA (pgRNA) are encapsidated together with the P protein, and reverse-transcribed inside the nucleocapsid. Initiation of reverse-transcription occurs first by binding the epsilon loop on the pgRNA genome, and is initiated by protein priming, thereby the 5'-end of (-)DNA is covalently linked to P protein. Partial (+)DNA is synthesized from the (-)DNA template and generates the relaxed circular DNA (RC-DNA) genome. After budding and infection, the RC-DNA migrates in the nucleus, and is converted into a plasmid-like covalently closed circular DNA (cccDNA). The activity of P protein does not seem to be necessary for cccDNA generation, and is presumably released from (+)DNA by host nuclear DNA repair machinery. This chain is Protein P, found in Homo sapiens (Human).